Consider the following 496-residue polypeptide: Ribose import ATP-binding protein RbsA (496 aa).

2 ABC transporter domains span residues 3–239 (IVME…VGRE) and 246–493 (ERTP…TGGN). Residue 35–42 (GENGAGKS) coordinates ATP.

It belongs to the ABC transporter superfamily. Ribose importer (TC 3.A.1.2.1) family. As to quaternary structure, the complex is composed of an ATP-binding protein (RbsA), two transmembrane proteins (RbsC) and a solute-binding protein (RbsB).

It is found in the cell membrane. The enzyme catalyses D-ribose(out) + ATP + H2O = D-ribose(in) + ADP + phosphate + H(+). Its function is as follows. Part of the ABC transporter complex RbsABC involved in ribose import. Responsible for energy coupling to the transport system. The protein is Ribose import ATP-binding protein RbsA of Oceanobacillus iheyensis (strain DSM 14371 / CIP 107618 / JCM 11309 / KCTC 3954 / HTE831).